The chain runs to 410 residues: WD repeat and FYVE domain-containing protein 1 (410 aa).

WD repeat units lie at residues G22–P61, T66–N105, A112–G150, F153–I192, G197–L236, and G240–P279. The FYVE-type zinc finger occupies W281–K352. Zn(2+)-binding residues include C287, C290, C314, C317, C322, C325, C344, and C347. One copy of the WD 7 repeat lies at E364–L403. At S408 the chain carries Phosphoserine.

In terms of assembly, binds PtdIns3P in vitro with high specificity over other phosphoinositides. Interacts (via WD repeat 2) with tyrosine-phosphorylated TLR3 (via TIR domain) in response to poly(I:C). Interacts with TLR4 in response to LPS. Interacts with TICAM1 in response to poly(I:C).

The protein resides in the early endosome. In terms of biological role, positively regulates TLR3- and TLR4-mediated signaling pathways by bridging the interaction between TLR3 or TLR4 and TICAM1. Promotes TLR3/4 ligand-induced activation of transcription factors IRF3 and NF-kappa-B, as well as the production of IFN-beta and inflammatory cytokines. This Mus musculus (Mouse) protein is WD repeat and FYVE domain-containing protein 1 (Wdfy1).